The chain runs to 223 residues: uncharacterized protein (223 aa).

To M.jannaschii MJ0575.

This is an uncharacterized protein from Methanocaldococcus jannaschii (strain ATCC 43067 / DSM 2661 / JAL-1 / JCM 10045 / NBRC 100440) (Methanococcus jannaschii).